The primary structure comprises 118 residues: Large ribosomal subunit protein bL20 (118 aa).

The protein belongs to the bacterial ribosomal protein bL20 family.

In terms of biological role, binds directly to 23S ribosomal RNA and is necessary for the in vitro assembly process of the 50S ribosomal subunit. It is not involved in the protein synthesizing functions of that subunit. In Francisella philomiragia subsp. philomiragia (strain ATCC 25017 / CCUG 19701 / FSC 153 / O#319-036), this protein is Large ribosomal subunit protein bL20.